The chain runs to 299 residues: MKIYVVATIAWILLQFSAWTTTDAVTSITLDLVNPTAGQYSSFVDKIRNNVKDPNLKYGGTDIAVIGPPSKEKFLRINFQSSRGTVSLGLKRDNLYVVAYLAMDNTNVNRAYYFRSEITSAESTALFPEATTANQKALEYTEDYQSIEKNAQITQGDQSRKELGLGIDLLSTSMEAVNKKARVVKDEARFLLIAIQMTAEAARFRYIQNLVIKNFPNKFNSENKVIQFEVNWKKISTAIYGDAKNGVFNKDYDFGFGKVRQVKDLQMGLLMYLGKPKSSNEANSTVRHYGPLKPTLLIT.

Positions 1 to 24 (MKIYVVATIAWILLQFSAWTTTDA) are cleaved as a signal peptide. Glu-200 is an active-site residue. A propeptide spanning residues 278-299 (SSNEANSTVRHYGPLKPTLLIT) is cleaved from the precursor. N-linked (GlcNAc...) asparagine glycosylation is present at Asn-283.

This sequence belongs to the ribosome-inactivating protein family. Type 1 RIP subfamily. As to expression, seeds and leaves of the plant.

The catalysed reaction is Endohydrolysis of the N-glycosidic bond at one specific adenosine on the 28S rRNA.. In terms of biological role, ribosome-inactivating protein of type 1, inhibits protein synthesis in animal cells. Useful as immunotoxin for pharmacological applications. The sequence is that of Ribosome-inactivating protein saporin-6 (SAP6) from Saponaria officinalis (Common soapwort).